Consider the following 203-residue polypeptide: Urease accessory protein UreG (203 aa).

A GTP-binding site is contributed by 11-18 (GPVGSGKT).

It belongs to the SIMIBI class G3E GTPase family. UreG subfamily. As to quaternary structure, homodimer. UreD, UreF and UreG form a complex that acts as a GTP-hydrolysis-dependent molecular chaperone, activating the urease apoprotein by helping to assemble the nickel containing metallocenter of UreC. The UreE protein probably delivers the nickel.

Its subcellular location is the cytoplasm. In terms of biological role, facilitates the functional incorporation of the urease nickel metallocenter. This process requires GTP hydrolysis, probably effectuated by UreG. This chain is Urease accessory protein UreG, found in Prochlorococcus marinus (strain MIT 9301).